A 147-amino-acid polypeptide reads, in one-letter code: Hemoglobin subunit gamma (147 aa).

One can recognise a Globin domain in the interval 3–147 (NFTAEDKAAI…VASALASRYH (145 aa)). Positions 64 and 93 each coordinate heme b.

This sequence belongs to the globin family. As to quaternary structure, heterotetramer of two alpha chains and two gamma chains in fetal hemoglobin (Hb F). As to expression, red blood cells.

Functionally, gamma chains make up the fetal hemoglobin F, in combination with alpha chains. This Callithrix jacchus (White-tufted-ear marmoset) protein is Hemoglobin subunit gamma (HBG1).